The sequence spans 92 residues: Small ribosomal subunit protein uS19 (92 aa).

The protein belongs to the universal ribosomal protein uS19 family.

Protein S19 forms a complex with S13 that binds strongly to the 16S ribosomal RNA. The sequence is that of Small ribosomal subunit protein uS19 from Methylobacterium nodulans (strain LMG 21967 / CNCM I-2342 / ORS 2060).